A 342-amino-acid polypeptide reads, in one-letter code: UDP-N-acetylglucosamine--N-acetylmuramyl-(pentapeptide) pyrophosphoryl-undecaprenol N-acetylglucosamine transferase (342 aa).

UDP-N-acetyl-alpha-D-glucosamine contacts are provided by residues 10 to 12 (TGG), Asn-124, Ser-177, and Gln-275.

It belongs to the glycosyltransferase 28 family. MurG subfamily.

Its subcellular location is the cell inner membrane. The enzyme catalyses di-trans,octa-cis-undecaprenyl diphospho-N-acetyl-alpha-D-muramoyl-L-alanyl-D-glutamyl-meso-2,6-diaminopimeloyl-D-alanyl-D-alanine + UDP-N-acetyl-alpha-D-glucosamine = di-trans,octa-cis-undecaprenyl diphospho-[N-acetyl-alpha-D-glucosaminyl-(1-&gt;4)]-N-acetyl-alpha-D-muramoyl-L-alanyl-D-glutamyl-meso-2,6-diaminopimeloyl-D-alanyl-D-alanine + UDP + H(+). It functions in the pathway cell wall biogenesis; peptidoglycan biosynthesis. Cell wall formation. Catalyzes the transfer of a GlcNAc subunit on undecaprenyl-pyrophosphoryl-MurNAc-pentapeptide (lipid intermediate I) to form undecaprenyl-pyrophosphoryl-MurNAc-(pentapeptide)GlcNAc (lipid intermediate II). This Campylobacter jejuni subsp. jejuni serotype O:6 (strain 81116 / NCTC 11828) protein is UDP-N-acetylglucosamine--N-acetylmuramyl-(pentapeptide) pyrophosphoryl-undecaprenol N-acetylglucosamine transferase.